The chain runs to 465 residues: MGPTSLLSFFFTFLTLFHGFTAQQWPNECQLDQLNALEPSQIIKSEGGRIEVWDHHAPQLRCSGFAFERFVIEPQGLYLPTFLNAGKLTFVVHGHALMGKVTPGCAETFNDSPVFGQGQGQEQGQGQGQGQGQGFRDMHQKVEHLRSGDTIATPPGVAQWFYNNGNEPLILVAAADIANNLNQLDRNLRPFLLAGNNPQGQQWLQGRQQQKQNNIFNGFAPQILAQAFKISVETAQKLQNQQVNRGNIVKVQGQFGVIRPPLRQGQGGQQPQEEGNGLEETLCTMRCTENLDDPSSADVYKPSLGYISTLNSYNLPILRFLRLSALRGSIHNNAMVLPQWNVNANAALYVTKGKAHIQNVNDNGQRVFDQEISKGQLLVVPQGFAVVKRATSQQFQWIEFKSNDNAQINTLAGRTSVMRGLPLEVISNGYQISPQEARSVKFSTLETTLTQSSGPMGYGMPRVEA.

Residues 1 to 22 (MGPTSLLSFFFTFLTLFHGFTA) form the signal peptide. Disulfide bonds link Cys29-Cys62 and Cys105-Cys283. 2 consecutive Cupin type-1 domains span residues 34 to 236 (LNAL…ETAQ) and 289 to 438 (ENLD…QEAR). Thr108 bears the Phosphothreonine mark. The interval 112 to 135 (SPVFGQGQGQEQGQGQGQGQGQGF) is disordered. Positions 117-133 (QGQGQEQGQGQGQGQGQ) are enriched in gly residues. A Phosphotyrosine modification is found at Tyr306. Ser308 and Ser443 each carry phosphoserine.

Belongs to the 11S seed storage protein (globulins) family. Heterohexamer; each subunit is composed of an acidic and a basic chain derived from a single precursor and linked by a disulfide bond.

It localises to the rough endoplasmic reticulum. In terms of biological role, this is a seed storage protein. The sequence is that of Cruciferin CRU4 (CRU4) from Brassica napus (Rape).